The following is a 288-amino-acid chain: Shikimate dehydrogenase (NADP(+)) (288 aa).

Residues 21–23 (SLS) and T68 contribute to the shikimate site. K72 acts as the Proton acceptor in catalysis. Shikimate is bound by residues N93 and D108. NADP(+) contacts are provided by residues 132–136 (GNGGA) and L230. Y232 contacts shikimate. G253 contacts NADP(+).

It belongs to the shikimate dehydrogenase family. Homodimer.

It catalyses the reaction shikimate + NADP(+) = 3-dehydroshikimate + NADPH + H(+). It functions in the pathway metabolic intermediate biosynthesis; chorismate biosynthesis; chorismate from D-erythrose 4-phosphate and phosphoenolpyruvate: step 4/7. Involved in the biosynthesis of the chorismate, which leads to the biosynthesis of aromatic amino acids. Catalyzes the reversible NADPH linked reduction of 3-dehydroshikimate (DHSA) to yield shikimate (SA). This chain is Shikimate dehydrogenase (NADP(+)), found in Crocosphaera subtropica (strain ATCC 51142 / BH68) (Cyanothece sp. (strain ATCC 51142)).